The chain runs to 132 residues: Small ribosomal subunit protein uS8 (132 aa).

Belongs to the universal ribosomal protein uS8 family. In terms of assembly, part of the 30S ribosomal subunit. Contacts proteins S5 and S12.

Its function is as follows. One of the primary rRNA binding proteins, it binds directly to 16S rRNA central domain where it helps coordinate assembly of the platform of the 30S subunit. This Bacillus pumilus (strain SAFR-032) protein is Small ribosomal subunit protein uS8.